Reading from the N-terminus, the 708-residue chain is Elongation factor G (708 aa).

A tr-type G domain is found at 8 to 290 (KRYRNIGISA…AVIQYLPAPM (283 aa)). GTP contacts are provided by residues 17-24 (AHIDAGKT), 88-92 (DTPGH), and 142-145 (NKMD).

The protein belongs to the TRAFAC class translation factor GTPase superfamily. Classic translation factor GTPase family. EF-G/EF-2 subfamily.

It localises to the cytoplasm. Catalyzes the GTP-dependent ribosomal translocation step during translation elongation. During this step, the ribosome changes from the pre-translocational (PRE) to the post-translocational (POST) state as the newly formed A-site-bound peptidyl-tRNA and P-site-bound deacylated tRNA move to the P and E sites, respectively. Catalyzes the coordinated movement of the two tRNA molecules, the mRNA and conformational changes in the ribosome. The polypeptide is Elongation factor G (Psychrobacter arcticus (strain DSM 17307 / VKM B-2377 / 273-4)).